Here is a 238-residue protein sequence, read N- to C-terminus: MSTYVYGIARSSHPSLPEKMGGIGDPPQPVRILVQGALAALVSDAPEDLRPKRRDLMAHQNVLAEAGAGGAVLPMRFGGISPDDDAVLAVLDEREEHYLERLRALDDKVEYNVKASHDEEAVLHRVLADNPELRGLSEANRAAGGGTYEQKLALGERVAAAVQQREASDAVLIQEALQAEATDVRPGPESGAWLANISFLVERDRADGFVAAIDKLQQANHHLVLQVNGPLPPYSFVE.

The protein belongs to the gas vesicle GvpF/GvpL family. In terms of assembly, binds GvpA.

The protein resides in the gas vesicle. Its function is as follows. A minor component of the gas vesicle, may be involved in preventing GvpA aggregation during gas vesicle nucleation. Gas vesicles are hollow, gas filled proteinaceous nanostructures found in some microorganisms. It is not clear what function gas vesicles perform in soil bacteria. The polypeptide is Gas vesicle protein F (Streptomyces sp. (strain CB03234)).